We begin with the raw amino-acid sequence, 271 residues long: Neurexophilin-1 (271 aa).

An N-terminal signal peptide occupies residues 1-21; it reads MQAACWYVLLLLQPTVYLVTC. The II stretch occupies residues 22 to 97; that stretch reads ANLTNGGKSE…WDWLRNSTDL (76 aa). N-linked (GlcNAc...) asparagine glycans are attached at residues N23, N68, N93, N146, N156, and N162. The III stretch occupies residues 98-176; the sequence is QEPRPRAKRR…LVPPTKIVEF (79 aa). An IV (linker domain) region spans residues 177–185; sequence DLAQQTVID. Residues 186 to 271 are v (Cys-rich); sequence AKDSKSFNCR…HSDTPYFPSG (86 aa).

Belongs to the neurexophilin family. May be proteolytically processed at the boundary between the N-terminal non-conserved and the central conserved domain in neuron-like cells. In terms of tissue distribution, brain, only in a scattered subpopulation of neurons that probably represent inhibitory interneurons.

The protein resides in the secreted. Its function is as follows. May be signaling molecules that resemble neuropeptides. Ligand for alpha-neurexins. This chain is Neurexophilin-1 (Nxph1), found in Mus musculus (Mouse).